Here is a 350-residue protein sequence, read N- to C-terminus: Ketol-acid reductoisomerase (NADP(+)) 2 (350 aa).

One can recognise a KARI N-terminal Rossmann domain in the interval 3–183 (ATIWYEKDAD…GALRAGAIKT (181 aa)). Residues 26–29 (YGSQ), Arg-49, Ser-52, Ser-54, and 84–87 (DQYQ) contribute to the NADP(+) site. His-109 is an active-site residue. Gly-135 provides a ligand contact to NADP(+). The KARI C-terminal knotted domain maps to 184–327 (TFTEETETDL…PKLRAMFSWN (144 aa)). Asp-192, Glu-196, Glu-228, and Glu-232 together coordinate Mg(2+). Ser-253 contacts substrate. A disordered region spans residues 331 to 350 (AKDKDETESFNGKIARTQVQ).

This sequence belongs to the ketol-acid reductoisomerase family. Requires Mg(2+) as cofactor.

It catalyses the reaction (2R)-2,3-dihydroxy-3-methylbutanoate + NADP(+) = (2S)-2-acetolactate + NADPH + H(+). It carries out the reaction (2R,3R)-2,3-dihydroxy-3-methylpentanoate + NADP(+) = (S)-2-ethyl-2-hydroxy-3-oxobutanoate + NADPH + H(+). The protein operates within amino-acid biosynthesis; L-isoleucine biosynthesis; L-isoleucine from 2-oxobutanoate: step 2/4. It functions in the pathway amino-acid biosynthesis; L-valine biosynthesis; L-valine from pyruvate: step 2/4. Involved in the biosynthesis of branched-chain amino acids (BCAA). Catalyzes an alkyl-migration followed by a ketol-acid reduction of (S)-2-acetolactate (S2AL) to yield (R)-2,3-dihydroxy-isovalerate. In the isomerase reaction, S2AL is rearranged via a Mg-dependent methyl migration to produce 3-hydroxy-3-methyl-2-ketobutyrate (HMKB). In the reductase reaction, this 2-ketoacid undergoes a metal-dependent reduction by NADPH to yield (R)-2,3-dihydroxy-isovalerate. The protein is Ketol-acid reductoisomerase (NADP(+)) 2 of Bifidobacterium longum (strain NCC 2705).